The chain runs to 665 residues: E3 ubiquitin-protein ligase cblA (665 aa).

Residues 30–50 (NNNNNINNNNNNNNINSNNNG) form a disordered region. Positions 109 to 231 (TSLVNYIHYE…NNENNNNNNN (123 aa)) are 4H. Residues 109 to 400 (TSLVNYIHYE…PDIFKSILSF (292 aa)) enclose the Cbl-PTB domain. The tract at residues 232-306 (NYNPYELLSN…FKLSVFIKWF (75 aa)) is EF-hand-like. Ca(2+)-binding residues include Asp-287, Thr-289, Asp-291, and Tyr-293. The tract at residues 307-400 (GALPVSLGIF…PDIFKSILSF (94 aa)) is SH2-like. Disordered regions lie at residues 437-456 (ENNNNQNNNQNNNNNNINTF) and 467-609 (DSSN…NNNN). Low complexity predominate over residues 467-478 (DSSNSSDTNKSP). The stretch at 479-544 (TKSRKSSFKN…NNNNNNNNNN (66 aa)) forms a coiled coil. Over residues 486–512 (FKNDKDKKEKEKEKGKDKEKEKERVSD) the composition is skewed to basic and acidic residues. 2 stretches are compositionally biased toward low complexity: residues 530-561 (NNNNNNNNNNNNNNNNNNNNNNNNNNSSNNNN) and 571-609 (TSNGSSGNNNNNNNNNNNNNNNNNNNNSSSTTKRNNNNN). The RING-type zinc finger occupies 618–653 (CTVCMDNEINTVFLECGHLSCCSLCSVKLKKCPICR).

Ubiquitinated.

It is found in the cytoplasm. The protein localises to the nucleus. The catalysed reaction is S-ubiquitinyl-[E2 ubiquitin-conjugating enzyme]-L-cysteine + [acceptor protein]-L-lysine = [E2 ubiquitin-conjugating enzyme]-L-cysteine + N(6)-ubiquitinyl-[acceptor protein]-L-lysine.. Its pathway is protein modification; protein ubiquitination. In terms of biological role, acts as an E3 ubiquitin-protein ligase, which accepts ubiquitin from specific E2 ubiquitin-conjugating enzymes, and then transfers it to substrates promoting their degradation by the proteasome. Up-regulates STATc tyrosine phosphorylation via an inhibitory effect on ptpC accumulation. Recognizes activated receptor tyrosine kinases, RTKs and terminates signaling. This Dictyostelium discoideum (Social amoeba) protein is E3 ubiquitin-protein ligase cblA (cblA-1).